The primary structure comprises 136 residues: Large ribosomal subunit protein bL20 (136 aa).

The protein belongs to the bacterial ribosomal protein bL20 family.

Binds directly to 23S ribosomal RNA and is necessary for the in vitro assembly process of the 50S ribosomal subunit. It is not involved in the protein synthesizing functions of that subunit. The chain is Large ribosomal subunit protein bL20 from Tropheryma whipplei (strain TW08/27) (Whipple's bacillus).